The sequence spans 314 residues: Glutathione synthetase (314 aa).

The 187-residue stretch at 125–311 folds into the ATP-grasp domain; it reads EKLAAQLFPQ…IAGQLFDAIE (187 aa). 151–208 provides a ligand contact to ATP; that stretch reads FVQKQEQAILKPLDGMGGHSIFRSSNGDPNLNVILETLTDGGRTLAIAQRYLQQIIEG. Mg(2+)-binding residues include E282 and N284.

It belongs to the prokaryotic GSH synthase family. Mg(2+) is required as a cofactor. It depends on Mn(2+) as a cofactor.

The enzyme catalyses gamma-L-glutamyl-L-cysteine + glycine + ATP = glutathione + ADP + phosphate + H(+). The protein operates within sulfur metabolism; glutathione biosynthesis; glutathione from L-cysteine and L-glutamate: step 2/2. The chain is Glutathione synthetase from Xylella fastidiosa (strain 9a5c).